The chain runs to 486 residues: O-methyltransferase gedA (486 aa).

Residues 298 to 299 (GG), Asp321, 353 to 354 (SF), and Arg369 each bind S-adenosyl-L-methionine. Residue His373 is the Proton acceptor of the active site.

It belongs to the class I-like SAM-binding methyltransferase superfamily. Cation-independent O-methyltransferase family.

It carries out the reaction emodin + S-adenosyl-L-methionine = questin + S-adenosyl-L-homocysteine + H(+). Its pathway is secondary metabolite biosynthesis. O-methyltransferase; part of the gene cluster that mediates the biosynthesis of geodin, an intermediate in the biosynthesis of other natural products. The pathway begins with the synthesis of atrochrysone thioester by the polyketide synthase (PKS) gedC. The atrochrysone carboxyl ACP thioesterase gedB then breaks the thioester bond and releases the atrochrysone carboxylic acid from gedC. The atrochrysone carboxylic acid is then converted to atrochrysone which is further transformed into emodinanthrone. The next step is performed by the emodinanthrone oxygenase gedH that catalyzes the oxidation of emodinanthrone to emodin. Emodin O-methyltransferase encoded probably by gedA then catalyzes methylation of the 8-hydroxy group of emodin to form questin. Ring cleavage of questin by questin oxidase gedK leads to desmethylsulochrin via several intermediates including questin epoxide. Another methylation step probably catalyzed by methyltransferase gedG leads to the formation of sulochrin which is further converted to dihydrogeodin by the sulochrin halogenase gedL. Finally, the dihydrogeodin oxidase gedJ catalyzes the stereospecific phenol oxidative coupling reaction converting dihydrogeodin to geodin. This chain is O-methyltransferase gedA, found in Aspergillus terreus (strain NIH 2624 / FGSC A1156).